A 411-amino-acid polypeptide reads, in one-letter code: Putative ion-transport protein YfeO (411 aa).

11 consecutive transmembrane segments (helical) span residues Met-9–Ala-29, Asp-54–Ile-74, Ala-99–Pro-119, Ile-149–Ile-169, Leu-186–Pro-206, Ile-223–Cys-243, Val-258–Leu-278, Leu-296–Ala-316, Gly-322–His-342, Val-343–Val-363, and Leu-386–Ala-406.

Belongs to the chloride channel (TC 2.A.49) family.

Its subcellular location is the cell membrane. This chain is Putative ion-transport protein YfeO, found in Salmonella agona (strain SL483).